The following is a 230-amino-acid chain: Large ribosomal subunit protein uL1c (230 aa).

It belongs to the universal ribosomal protein uL1 family. As to quaternary structure, part of the 50S ribosomal subunit.

It localises to the plastid. Its subcellular location is the chloroplast. Functionally, binds directly to 23S rRNA. Might be involved in E site tRNA release (Potential). This chain is Large ribosomal subunit protein uL1c (rpl1), found in Trieres chinensis (Marine centric diatom).